A 344-amino-acid chain; its full sequence is Uroporphyrinogen decarboxylase (344 aa).

Residues 26–30, F45, D75, Y151, S206, and H320 each bind substrate; that span reads RQAGR.

It belongs to the uroporphyrinogen decarboxylase family. As to quaternary structure, homodimer.

The protein resides in the cytoplasm. The catalysed reaction is uroporphyrinogen III + 4 H(+) = coproporphyrinogen III + 4 CO2. The protein operates within porphyrin-containing compound metabolism; protoporphyrin-IX biosynthesis; coproporphyrinogen-III from 5-aminolevulinate: step 4/4. In terms of biological role, catalyzes the decarboxylation of four acetate groups of uroporphyrinogen-III to yield coproporphyrinogen-III. In Staphylococcus epidermidis (strain ATCC 35984 / DSM 28319 / BCRC 17069 / CCUG 31568 / BM 3577 / RP62A), this protein is Uroporphyrinogen decarboxylase.